A 720-amino-acid polypeptide reads, in one-letter code: Fatty acid CoA ligase Acsl3 (720 aa).

Residues 21–41 traverse the membrane as a helical; Signal-anchor for type III membrane protein segment; that stretch reads ILLYFIHFIISLYTILTYIPF. The Cytoplasmic segment spans residues 42 to 720; sequence YFLCESKQEK…ADIERMYGRK (679 aa). Position 683 is a phosphoserine (serine 683).

The protein belongs to the ATP-dependent AMP-binding enzyme family. It depends on Mg(2+) as a cofactor.

The protein resides in the mitochondrion outer membrane. The protein localises to the peroxisome membrane. Its subcellular location is the microsome membrane. It localises to the endoplasmic reticulum membrane. The catalysed reaction is a long-chain fatty acid + ATP + CoA = a long-chain fatty acyl-CoA + AMP + diphosphate. It carries out the reaction (E)-hexadec-2-enoate + ATP + CoA = (2E)-hexadecenoyl-CoA + AMP + diphosphate. It catalyses the reaction (5Z,8Z,11Z,14Z)-eicosatetraenoate + ATP + CoA = (5Z,8Z,11Z,14Z)-eicosatetraenoyl-CoA + AMP + diphosphate. The enzyme catalyses 15-hydroxy-(5Z,8Z,11Z,13E)-eicosatetraenoate + ATP + CoA = 15-hydroxy-(5Z,8Z,11Z,13E)-eicosatetraenoyl-CoA + AMP + diphosphate. The catalysed reaction is 12-hydroxy-(5Z,8Z,10E,14Z)-eicosatetraenoate + ATP + CoA = 12-hydroxy-(5Z,8Z,10E,14Z)-eicosatetraenoyl-CoA + AMP + diphosphate. It carries out the reaction 5-hydroxy-(6E,8Z,11Z,14Z)-eicosatetraenoate + ATP + CoA = 5-hydroxy-(6E,8Z,11Z,14Z)-eicosatetraenoyl-CoA + AMP + diphosphate. It catalyses the reaction 14,15-epoxy-(5Z,8Z,11Z)-eicosatrienoate + ATP + CoA = 14,15-epoxy-(5Z,8Z,11Z)-eicosatrienoyl-CoA + AMP + diphosphate. The enzyme catalyses 11,12-epoxy-(5Z,8Z,14Z)-eicosatrienoate + ATP + CoA = 11,12-epoxy-(5Z,8Z,14Z)-eicosatrienoyl-CoA + AMP + diphosphate. The catalysed reaction is a medium-chain fatty acid + ATP + CoA = a medium-chain fatty acyl-CoA + AMP + diphosphate. It carries out the reaction hexadecanoate + ATP + CoA = hexadecanoyl-CoA + AMP + diphosphate. It catalyses the reaction tetradecanoate + ATP + CoA = tetradecanoyl-CoA + AMP + diphosphate. The enzyme catalyses dodecanoate + ATP + CoA = dodecanoyl-CoA + AMP + diphosphate. The catalysed reaction is octadecanoate + ATP + CoA = octadecanoyl-CoA + AMP + diphosphate. It carries out the reaction eicosanoate + ATP + CoA = eicosanoyl-CoA + AMP + diphosphate. It catalyses the reaction (9Z)-octadecenoate + ATP + CoA = (9Z)-octadecenoyl-CoA + AMP + diphosphate. The enzyme catalyses (9Z)-hexadecenoate + ATP + CoA = (9Z)-hexadecenoyl-CoA + AMP + diphosphate. The catalysed reaction is (9Z,12Z)-octadecadienoate + ATP + CoA = (9Z,12Z)-octadecadienoyl-CoA + AMP + diphosphate. It carries out the reaction (9Z,12Z,15Z)-octadecatrienoate + ATP + CoA = (9Z,12Z,15Z)-octadecatrienoyl-CoA + AMP + diphosphate. It catalyses the reaction (4Z,7Z,10Z,13Z,16Z,19Z)-docosahexaenoate + ATP + CoA = (4Z,7Z,10Z,13Z,16Z,19Z)-docosahexaenoyl-CoA + AMP + diphosphate. The enzyme catalyses (5Z,8Z,11Z,14Z,17Z)-eicosapentaenoate + ATP + CoA = (5Z,8Z,11Z,14Z,17Z)-eicosapentaenoyl-CoA + AMP + diphosphate. The catalysed reaction is a fatty acid + ATP + CoA = a fatty acyl-CoA + AMP + diphosphate. Its function is as follows. Acyl-CoA synthetases (ACSL) activates long-chain fatty acids for both synthesis of cellular lipids, and degradation via beta-oxidation. ACSL3 is required for the incorporation of fatty acids into phosphatidylcholine, the major phospholipid located on the surface of VLDL (very low density lipoproteins). Has mainly an anabolic role in energy metabolism. Mediates hepatic lipogenesis. Preferentially uses myristate, laurate, arachidonate and eicosapentaenoate as substrates. Both isoforms exhibit the same level of activity. The polypeptide is Fatty acid CoA ligase Acsl3 (Mus musculus (Mouse)).